Consider the following 513-residue polypeptide: Histidine ammonia-lyase (513 aa).

A cross-link (5-imidazolinone (Ala-Gly)) is located at residues 143–145; sequence ASG. 2,3-didehydroalanine (Ser) is present on S144.

This sequence belongs to the PAL/histidase family. Post-translationally, contains an active site 4-methylidene-imidazol-5-one (MIO), which is formed autocatalytically by cyclization and dehydration of residues Ala-Ser-Gly.

The protein localises to the cytoplasm. It carries out the reaction L-histidine = trans-urocanate + NH4(+). It functions in the pathway amino-acid degradation; L-histidine degradation into L-glutamate; N-formimidoyl-L-glutamate from L-histidine: step 1/3. In Paracoccus denitrificans (strain Pd 1222), this protein is Histidine ammonia-lyase.